The sequence spans 189 residues: Thymidine kinase (189 aa).

ATP is bound by residues 9 to 16 and 85 to 88; these read GTMNSGKT and DESQ. The active-site Proton acceptor is E86. The Zn(2+) site is built by C143, C146, C180, and H183.

It belongs to the thymidine kinase family. Homotetramer.

It is found in the cytoplasm. The enzyme catalyses thymidine + ATP = dTMP + ADP + H(+). The protein is Thymidine kinase of Streptococcus pyogenes serotype M1.